The chain runs to 89 residues: Small ribosomal subunit protein uS15 (89 aa).

Belongs to the universal ribosomal protein uS15 family. As to quaternary structure, part of the 30S ribosomal subunit. Forms a bridge to the 50S subunit in the 70S ribosome, contacting the 23S rRNA.

One of the primary rRNA binding proteins, it binds directly to 16S rRNA where it helps nucleate assembly of the platform of the 30S subunit by binding and bridging several RNA helices of the 16S rRNA. Functionally, forms an intersubunit bridge (bridge B4) with the 23S rRNA of the 50S subunit in the ribosome. The sequence is that of Small ribosomal subunit protein uS15 from Polynucleobacter asymbioticus (strain DSM 18221 / CIP 109841 / QLW-P1DMWA-1) (Polynucleobacter necessarius subsp. asymbioticus).